The following is a 368-amino-acid chain: Histidinol-phosphate aminotransferase (368 aa).

Residue Lys-229 is modified to N6-(pyridoxal phosphate)lysine.

The protein belongs to the class-II pyridoxal-phosphate-dependent aminotransferase family. Histidinol-phosphate aminotransferase subfamily. In terms of assembly, homodimer. Pyridoxal 5'-phosphate is required as a cofactor.

The enzyme catalyses L-histidinol phosphate + 2-oxoglutarate = 3-(imidazol-4-yl)-2-oxopropyl phosphate + L-glutamate. Its pathway is amino-acid biosynthesis; L-histidine biosynthesis; L-histidine from 5-phospho-alpha-D-ribose 1-diphosphate: step 7/9. The chain is Histidinol-phosphate aminotransferase from Acidovorax sp. (strain JS42).